The sequence spans 350 residues: Ribosomal RNA large subunit methyltransferase M (350 aa).

S-adenosyl-L-methionine is bound by residues 217–220 (APGG), D236, D256, and D272. K301 functions as the Proton acceptor in the catalytic mechanism.

This sequence belongs to the class I-like SAM-binding methyltransferase superfamily. RNA methyltransferase RlmE family. RlmM subfamily. In terms of assembly, monomer.

The protein localises to the cytoplasm. The catalysed reaction is cytidine(2498) in 23S rRNA + S-adenosyl-L-methionine = 2'-O-methylcytidine(2498) in 23S rRNA + S-adenosyl-L-homocysteine + H(+). Catalyzes the 2'-O-methylation at nucleotide C2498 in 23S rRNA. This is Ribosomal RNA large subunit methyltransferase M from Teredinibacter turnerae (strain ATCC 39867 / T7901).